Reading from the N-terminus, the 1028-residue chain is Carbamoyl phosphate synthase large chain (1028 aa).

Residues 1–409 (MPPRRDLKKI…ALMKALRGLE (409 aa)) form a carboxyphosphate synthetic domain region. R129, R169, G175, G176, E208, V210, E215, G241, V242, H243, Q285, and E299 together coordinate ATP. The 196-residue stretch at 133-328 (QEAMRRIDLE…IAKIAALLAV (196 aa)) folds into the ATP-grasp 1 domain. Mg(2+) contacts are provided by Q285, E299, and N301. Residues Q285, E299, and N301 each coordinate Mn(2+). Positions 410–549 (RDVRALAGVR…YSTYELEDEV (140 aa)) are oligomerization domain. The tract at residues 550-933 (WPSQKPKVVI…AYYKAELGAG (384 aa)) is carbamoyl phosphate synthetic domain. One can recognise an ATP-grasp 2 domain in the interval 674 to 866 (HALCQRLGIP…LAKLAALIAV (193 aa)). The ATP site is built by R710, R750, L752, E757, G782, V783, H784, S785, Q825, and E837. Mg(2+) contacts are provided by Q825, E837, and N839. Positions 825, 837, and 839 each coordinate Mn(2+). Residues 934 to 1028 (QRLPLSGQVR…QDWHQKAPRG (95 aa)) enclose the MGS-like domain. The tract at residues 934 to 1028 (QRLPLSGQVR…QDWHQKAPRG (95 aa)) is allosteric domain.

It belongs to the CarB family. Composed of two chains; the small (or glutamine) chain promotes the hydrolysis of glutamine to ammonia, which is used by the large (or ammonia) chain to synthesize carbamoyl phosphate. Tetramer of heterodimers (alpha,beta)4. The cofactor is Mg(2+). Mn(2+) serves as cofactor.

The catalysed reaction is hydrogencarbonate + L-glutamine + 2 ATP + H2O = carbamoyl phosphate + L-glutamate + 2 ADP + phosphate + 2 H(+). The enzyme catalyses hydrogencarbonate + NH4(+) + 2 ATP = carbamoyl phosphate + 2 ADP + phosphate + 2 H(+). The protein operates within amino-acid biosynthesis; L-arginine biosynthesis; carbamoyl phosphate from bicarbonate: step 1/1. It functions in the pathway pyrimidine metabolism; UMP biosynthesis via de novo pathway; (S)-dihydroorotate from bicarbonate: step 1/3. Its function is as follows. Large subunit of the glutamine-dependent carbamoyl phosphate synthetase (CPSase). CPSase catalyzes the formation of carbamoyl phosphate from the ammonia moiety of glutamine, carbonate, and phosphate donated by ATP, constituting the first step of 2 biosynthetic pathways, one leading to arginine and/or urea and the other to pyrimidine nucleotides. The large subunit (synthetase) binds the substrates ammonia (free or transferred from glutamine from the small subunit), hydrogencarbonate and ATP and carries out an ATP-coupled ligase reaction, activating hydrogencarbonate by forming carboxy phosphate which reacts with ammonia to form carbamoyl phosphate. The sequence is that of Carbamoyl phosphate synthase large chain from Thermus thermophilus (strain ATCC BAA-163 / DSM 7039 / HB27).